We begin with the raw amino-acid sequence, 294 residues long: Phosphatidylserine decarboxylase proenzyme (294 aa).

Active-site charge relay system; for autoendoproteolytic cleavage activity residues include aspartate 100, histidine 157, and serine 261. Serine 261 functions as the Schiff-base intermediate with substrate; via pyruvic acid; for decarboxylase activity in the catalytic mechanism. Serine 261 is modified (pyruvic acid (Ser); by autocatalysis).

It belongs to the phosphatidylserine decarboxylase family. PSD-B subfamily. Prokaryotic type I sub-subfamily. Heterodimer of a large membrane-associated beta subunit and a small pyruvoyl-containing alpha subunit. Pyruvate serves as cofactor. Post-translationally, is synthesized initially as an inactive proenzyme. Formation of the active enzyme involves a self-maturation process in which the active site pyruvoyl group is generated from an internal serine residue via an autocatalytic post-translational modification. Two non-identical subunits are generated from the proenzyme in this reaction, and the pyruvate is formed at the N-terminus of the alpha chain, which is derived from the carboxyl end of the proenzyme. The autoendoproteolytic cleavage occurs by a canonical serine protease mechanism, in which the side chain hydroxyl group of the serine supplies its oxygen atom to form the C-terminus of the beta chain, while the remainder of the serine residue undergoes an oxidative deamination to produce ammonia and the pyruvoyl prosthetic group on the alpha chain. During this reaction, the Ser that is part of the protease active site of the proenzyme becomes the pyruvoyl prosthetic group, which constitutes an essential element of the active site of the mature decarboxylase.

The protein localises to the cell membrane. The catalysed reaction is a 1,2-diacyl-sn-glycero-3-phospho-L-serine + H(+) = a 1,2-diacyl-sn-glycero-3-phosphoethanolamine + CO2. Its pathway is phospholipid metabolism; phosphatidylethanolamine biosynthesis; phosphatidylethanolamine from CDP-diacylglycerol: step 2/2. Catalyzes the formation of phosphatidylethanolamine (PtdEtn) from phosphatidylserine (PtdSer). This Histophilus somni (strain 129Pt) (Haemophilus somnus) protein is Phosphatidylserine decarboxylase proenzyme.